The following is a 271-amino-acid chain: Protein PXR1 (271 aa).

Disordered stretches follow at residues 1 to 26 and 149 to 233; these read MGLA…NNTS and KKRP…DSAA. Residues 17–26 are compositionally biased toward polar residues; the sequence is RNTTWSNNTS. Positions 25–71 constitute a G-patch domain; the sequence is TSRFGHKHLEKLGWKPGSGLGLVPDSTTSHIKVSIKDDNLGLGAKLK. A compositionally biased stretch (basic residues) spans 165-205; it reads KKTKKVKKEKKVKKVKKEKKEKKEKKDKKEKKVKKEKKEKK. The segment covering 206 to 230 has biased composition (basic and acidic residues); the sequence is EKKLKDKHSKDTNEITRDQMLKPRD.

The protein belongs to the PINX1 family.

It is found in the nucleus. Its subcellular location is the nucleolus. Its function is as follows. Involved in rRNA-processing at A0, A1 and A2 sites and negatively regulates telomerase. The chain is Protein PXR1 (PXR1) from Kluyveromyces lactis (strain ATCC 8585 / CBS 2359 / DSM 70799 / NBRC 1267 / NRRL Y-1140 / WM37) (Yeast).